Here is a 115-residue protein sequence, read N- to C-terminus: NADH-ubiquinone oxidoreductase chain 3 (115 aa).

Helical transmembrane passes span 4-24 (LVAL…AFWL), 55-75 (FFLV…LLPL), and 87-107 (MMLT…YEWM).

The protein belongs to the complex I subunit 3 family. Core subunit of respiratory chain NADH dehydrogenase (Complex I) which is composed of 45 different subunits. Interacts with TMEM186. Interacts with TMEM242.

The protein resides in the mitochondrion inner membrane. It catalyses the reaction a ubiquinone + NADH + 5 H(+)(in) = a ubiquinol + NAD(+) + 4 H(+)(out). Core subunit of the mitochondrial membrane respiratory chain NADH dehydrogenase (Complex I) which catalyzes electron transfer from NADH through the respiratory chain, using ubiquinone as an electron acceptor. Essential for the catalytic activity of complex I. This is NADH-ubiquinone oxidoreductase chain 3 from Habromys lophurus (Crested-tailed deer mouse).